The chain runs to 153 residues: Ribosomal RNA large subunit methyltransferase H (153 aa).

S-adenosyl-L-methionine is bound by residues leucine 70, glycine 102, and 121 to 126 (LSRMTF).

Belongs to the RNA methyltransferase RlmH family. In terms of assembly, homodimer.

Its subcellular location is the cytoplasm. It carries out the reaction pseudouridine(1915) in 23S rRNA + S-adenosyl-L-methionine = N(3)-methylpseudouridine(1915) in 23S rRNA + S-adenosyl-L-homocysteine + H(+). Functionally, specifically methylates the pseudouridine at position 1915 (m3Psi1915) in 23S rRNA. This Geobacter sulfurreducens (strain ATCC 51573 / DSM 12127 / PCA) protein is Ribosomal RNA large subunit methyltransferase H.